A 211-amino-acid chain; its full sequence is Methylamine utilization protein MauD (211 aa).

The chain crosses the membrane as a helical span at residues 5–25; the sequence is ILIASNVLLWGAFLALAALML. Residues 50–187 form the Thioredoxin domain; it reads PDVGERSPIF…LFETIREGHS (138 aa).

Its subcellular location is the membrane. It participates in one-carbon metabolism; methylamine degradation. Its function is as follows. May be specifically involved in the processing, transport, and/or maturation of the MADH beta-subunit. This chain is Methylamine utilization protein MauD (mauD), found in Methylophilus methylotrophus (Bacterium W3A1).